We begin with the raw amino-acid sequence, 73 residues long: RNA-binding protein Hfq (73 aa).

A Sm domain is found at 8 to 68 (DQFLNQIRKE…ISTFAPQKNV (61 aa)).

The protein belongs to the Hfq family. In terms of assembly, homohexamer.

Its function is as follows. RNA chaperone that binds small regulatory RNA (sRNAs) and mRNAs to facilitate mRNA translational regulation in response to envelope stress, environmental stress and changes in metabolite concentrations. Also binds with high specificity to tRNAs. In Bacillus licheniformis (strain ATCC 14580 / DSM 13 / JCM 2505 / CCUG 7422 / NBRC 12200 / NCIMB 9375 / NCTC 10341 / NRRL NRS-1264 / Gibson 46), this protein is RNA-binding protein Hfq.